The chain runs to 189 residues: Class A basic helix-loop-helix protein 15 (189 aa).

Residues 1 to 12 (MKTKNRPPRRRA) are compositionally biased toward basic residues. 2 disordered regions span residues 1-85 (MKTK…ERER) and 167-189 (TEAQ…REGT). Position 25 is a phosphothreonine (T25). The segment covering 68–85 (GRRDSSIQRRLESNERER) has biased composition (basic and acidic residues). The bHLH domain maps to 75–127 (QRRLESNERERQRMHKLNNAFQALREVIPHVRADKKLSKIETLTLAKNYIKSL).

As to quaternary structure, forms homodimers or heterodimers with TCF3 gene products E12 and E47. These dimers bind to the E-box site, however, heterodimer with MYOD1 does not bind target DNA. As to expression, expressed in brain, liver, spleen and skeletal muscle.

The protein localises to the nucleus. Functionally, plays a role in controlling the transcriptional activity of MYOD1, ensuring that expanding myoblast populations remain undifferentiated. Repression may occur through muscle-specific E-box occupancy by homodimers. May also negatively regulate bHLH-mediated transcription through an N-terminal repressor domain. Serves as a key regulator of acinar cell function, stability, and identity. Also required for normal organelle localization in exocrine cells and for mitochondrial calcium ion transport. May function as a unique regulator of gene expression in several different embryonic and postnatal cell lineages. Binds to the E-box consensus sequence 5'-CANNTG-3'. The protein is Class A basic helix-loop-helix protein 15 (BHLHA15) of Homo sapiens (Human).